We begin with the raw amino-acid sequence, 85 residues long: Small ribosomal subunit protein uS15c (85 aa).

Belongs to the universal ribosomal protein uS15 family. As to quaternary structure, part of the 30S ribosomal subunit.

The protein localises to the plastid. Its subcellular location is the chloroplast. The chain is Small ribosomal subunit protein uS15c (rps15) from Chaetosphaeridium globosum (Charophycean green alga).